Consider the following 58-residue polypeptide: Cecropin-A (58 aa).

The N-terminal stretch at 1 to 23 (MNFSKIFIFVVLAVLLLCSQTEA) is a signal peptide. Leu-57 is subject to Leucine amide.

This sequence belongs to the cecropin family. Relatively abundant in head, thorax and to a lesser extent in abdominal carcass and anterior midgut.

It is found in the secreted. In terms of biological role, antibacterial activity against several Gram-positive and Gram-negative bacteria. Antifungal activity against A.fumigatus, B.cinerea, F.culmorum, F.oxysporum, N.crassa, C.albicans, C.neoformans and S.cerevisiae. In Anopheles gambiae (African malaria mosquito), this protein is Cecropin-A (CecA).